The sequence spans 210 residues: Probable nicotinate-nucleotide adenylyltransferase (210 aa).

Belongs to the NadD family.

The enzyme catalyses nicotinate beta-D-ribonucleotide + ATP + H(+) = deamido-NAD(+) + diphosphate. It participates in cofactor biosynthesis; NAD(+) biosynthesis; deamido-NAD(+) from nicotinate D-ribonucleotide: step 1/1. Its function is as follows. Catalyzes the reversible adenylation of nicotinate mononucleotide (NaMN) to nicotinic acid adenine dinucleotide (NaAD). This chain is Probable nicotinate-nucleotide adenylyltransferase, found in Streptococcus pyogenes serotype M18 (strain MGAS8232).